The sequence spans 172 residues: Signal peptidase complex catalytic subunit SEC11 (172 aa).

The Cytoplasmic segment spans residues 1 to 14; that stretch reads MLSSLQNPRQAAAQ. A helical; Signal-anchor for type II membrane protein transmembrane segment spans residues 15-35; the sequence is LMNFGLILSTAFMMWKGLSVI. Residues 36–172 are Lumenal-facing; it reads TDSPSPIVVV…MGLVVVLQRE (137 aa). Active-site charge relay system residues include Ser-49, His-90, and Asp-115. A C-terminal short (CTS) helix region spans residues 158–169; that stretch reads VMLGIMGLVVVL.

Belongs to the peptidase S26B family. In terms of assembly, component of the signal peptidase complex (SPC) composed of a catalytic subunit SEC11 and three accessory subunits SPC1, SPC2 and SPC3. The complex induces a local thinning of the ER membrane which is used to measure the length of the signal peptide (SP) h-region of protein substrates. This ensures the selectivity of the complex towards h-regions shorter than 18-20 amino acids. SPC associates with the translocon complex.

The protein localises to the endoplasmic reticulum membrane. The catalysed reaction is Cleavage of hydrophobic, N-terminal signal or leader sequences from secreted and periplasmic proteins.. Catalytic component of the signal peptidase complex (SPC) which catalyzes the cleavage of N-terminal signal sequences from nascent proteins as they are translocated into the lumen of the endoplasmic reticulum. Specifically cleaves N-terminal signal peptides that contain a hydrophobic alpha-helix (h-region) shorter than 18-20 amino acids. In Chaetomium globosum (strain ATCC 6205 / CBS 148.51 / DSM 1962 / NBRC 6347 / NRRL 1970) (Soil fungus), this protein is Signal peptidase complex catalytic subunit SEC11 (SEC11).